We begin with the raw amino-acid sequence, 140 residues long: ATP synthase epsilon chain (140 aa).

Belongs to the ATPase epsilon chain family. As to quaternary structure, F-type ATPases have 2 components, CF(1) - the catalytic core - and CF(0) - the membrane proton channel. CF(1) has five subunits: alpha(3), beta(3), gamma(1), delta(1), epsilon(1). CF(0) has three main subunits: a, b and c.

It is found in the cell inner membrane. Its function is as follows. Produces ATP from ADP in the presence of a proton gradient across the membrane. The protein is ATP synthase epsilon chain of Neisseria meningitidis serogroup C (strain 053442).